A 276-amino-acid polypeptide reads, in one-letter code: Bis(5'-nucleosyl)-tetraphosphatase, symmetrical (276 aa).

The protein belongs to the Ap4A hydrolase family.

The enzyme catalyses P(1),P(4)-bis(5'-adenosyl) tetraphosphate + H2O = 2 ADP + 2 H(+). Hydrolyzes diadenosine 5',5'''-P1,P4-tetraphosphate to yield ADP. The chain is Bis(5'-nucleosyl)-tetraphosphatase, symmetrical from Tolumonas auensis (strain DSM 9187 / NBRC 110442 / TA 4).